The chain runs to 36 residues: Photosystem I reaction center subunit VIII (36 aa).

Residues 1–21 (MITFSFPSIFVPLVGLVFPAI) traverse the membrane as a helical segment.

Belongs to the PsaI family.

Its subcellular location is the plastid. It localises to the chloroplast thylakoid membrane. In terms of biological role, may help in the organization of the PsaL subunit. This chain is Photosystem I reaction center subunit VIII, found in Coffea arabica (Arabian coffee).